The primary structure comprises 180 residues: Large ribosomal subunit protein uL10 (180 aa).

Residues 161–180 (SKAEGSEETESNETTETVEE) are disordered. The span at 166–180 (SEETESNETTETVEE) shows a compositional bias: acidic residues.

It belongs to the universal ribosomal protein uL10 family. As to quaternary structure, part of the ribosomal stalk of the 50S ribosomal subunit. The N-terminus interacts with L11 and the large rRNA to form the base of the stalk. The C-terminus forms an elongated spine to which L12 dimers bind in a sequential fashion forming a multimeric L10(L12)X complex.

Its function is as follows. Forms part of the ribosomal stalk, playing a central role in the interaction of the ribosome with GTP-bound translation factors. In Finegoldia magna (strain ATCC 29328 / DSM 20472 / WAL 2508) (Peptostreptococcus magnus), this protein is Large ribosomal subunit protein uL10.